Reading from the N-terminus, the 385-residue chain is Glucose-fructose oxidoreductase domain-containing protein 2 (385 aa).

Positions 1–25 (MKMLPGVGVFGTGSSARVLVPLLRA) are cleaved as a signal peptide.

The protein belongs to the Gfo/Idh/MocA family.

It is found in the secreted. The protein localises to the extracellular space. Its subcellular location is the extracellular matrix. In terms of biological role, promotes matrix assembly. In Bos taurus (Bovine), this protein is Glucose-fructose oxidoreductase domain-containing protein 2 (GFOD2).